We begin with the raw amino-acid sequence, 796 residues long: Nuclear GTPase SLIP-GC (796 aa).

107 to 114 (GITGAGKS) contributes to the GTP binding site. 2 coiled-coil regions span residues 158 to 185 (SDQE…EEAD) and 742 to 776 (GLCK…LRRS).

It localises to the nucleus speckle. Its function is as follows. Nuclear GTPase found in germinal center B-cells, where it may inhibit function of the activation-induced cytidine deaminase AICDA. Reduces somatic hypermutation in B-cells which may enhance genome stability. The protein is Nuclear GTPase SLIP-GC of Mus musculus (Mouse).